The chain runs to 287 residues: 4-hydroxybenzoate octaprenyltransferase (287 aa).

The next 8 helical transmembrane spans lie at isoleucine 19–leucine 39, tryptophan 42–isoleucine 62, phenylalanine 95–isoleucine 115, tyrosine 136–alanine 156, tryptophan 166–valine 186, isoleucine 210–alanine 230, glycine 233–isoleucine 253, and alanine 264–leucine 284.

The protein belongs to the UbiA prenyltransferase family. It depends on Mg(2+) as a cofactor.

The protein resides in the cell inner membrane. It carries out the reaction all-trans-octaprenyl diphosphate + 4-hydroxybenzoate = 4-hydroxy-3-(all-trans-octaprenyl)benzoate + diphosphate. The protein operates within cofactor biosynthesis; ubiquinone biosynthesis. In terms of biological role, catalyzes the prenylation of para-hydroxybenzoate (PHB) with an all-trans polyprenyl group. Mediates the second step in the final reaction sequence of ubiquinone-8 (UQ-8) biosynthesis, which is the condensation of the polyisoprenoid side chain with PHB, generating the first membrane-bound Q intermediate 3-octaprenyl-4-hydroxybenzoate. The chain is 4-hydroxybenzoate octaprenyltransferase from Aliivibrio fischeri (strain MJ11) (Vibrio fischeri).